We begin with the raw amino-acid sequence, 78 residues long: Conotoxin TsMSGL-11 (78 aa).

A signal peptide spans Met1 to Ala24. Residues Gly25–Thr44 constitute a propeptide that is removed on maturation. Intrachain disulfides connect Cys51-Cys63, Cys55-Cys72, and Cys62-Cys76. A Phenylalanine amide modification is found at Phe77.

It belongs to the conotoxin O3 superfamily. Expressed by the venom duct.

The protein resides in the secreted. The sequence is that of Conotoxin TsMSGL-11 from Conus tessulatus (Tessellate cone).